The chain runs to 715 residues: Zinc finger protein 544 (715 aa).

One can recognise a KRAB domain in the interval 14-85; that stretch reads VCFEDVAMAF…EQEAPRDWKA (72 aa). Glycyl lysine isopeptide (Lys-Gly) (interchain with G-Cter in SUMO2) cross-links involve residues Lys273 and Lys289. Residues 354–374 form a C2H2-type 1; atypical zinc finger; it reads SVCNQCGKSFSCCKLIHQRTH. 12 consecutive C2H2-type zinc fingers follow at residues 380 to 402, 408 to 430, 436 to 458, 464 to 486, 492 to 514, 520 to 542, 548 to 570, 576 to 598, 604 to 626, 632 to 654, 660 to 682, and 688 to 710; these read FECT…QRTH, YECD…QRIH, YQCI…QRIH, YECT…KRTH, FKCT…QRTH, YECN…QRIH, YDCT…KRTH, YECN…LQIH, YKCN…QRTH, FECS…HRIH, and YECS…RRTH. Residue Lys534 forms a Glycyl lysine isopeptide (Lys-Gly) (interchain with G-Cter in SUMO2) linkage.

This sequence belongs to the krueppel C2H2-type zinc-finger protein family.

It is found in the nucleus. In terms of biological role, may be involved in transcriptional regulation. In Homo sapiens (Human), this protein is Zinc finger protein 544 (ZNF544).